We begin with the raw amino-acid sequence, 265 residues long: MERGDQPKRTRNENIFNCLYKNPEATFKLICFPWMGGGSTHFAKWGQDTHDLLEVHSLRLPGRESRVEEPLENDISQLVDEVVCALQPVIQDKPFAFFGHSMGSYIAFRTALGLKENNQPEPLHLFLSSATPVHSKAWHRIPKDDELSEEQISHYLMEFGGTPKHFAEAKEFVKQCSPIIRADLNIVRSCTSNVPSKAVLSCDLTCFVGSEDIAKDMEAWKDVTSGNAKIYQLPGGHFYLLDPANEKLIKNYIIKCLEVSSISNF.

Position 1 is an N-acetylmethionine (Met1). Catalysis depends on residues Ser101 and His237.

This sequence belongs to the thioesterase family. As to quaternary structure, interacts (via C-terminus) with FASN. In terms of tissue distribution, detected both in lactating and non-lactating breast epithelium (at protein level). Isoform 2 is up-regulated in bone marrow-derived mononuclear cells of rheumatoid arthritis patients.

Its subcellular location is the cytoplasm. It localises to the cytosol. The catalysed reaction is (9Z)-octadecenoyl-[ACP] + H2O = (9Z)-octadecenoate + holo-[ACP] + H(+). The enzyme catalyses decanoyl-CoA + H2O = decanoate + CoA + H(+). It catalyses the reaction dodecanoyl-CoA + H2O = dodecanoate + CoA + H(+). It carries out the reaction tetradecanoyl-CoA + H2O = tetradecanoate + CoA + H(+). The catalysed reaction is hexadecanoyl-CoA + H2O = hexadecanoate + CoA + H(+). Functionally, contributes to the release of free fatty acids from fatty acid synthase (FASN). Has broad substrate specificity, giving rise to a range of free fatty acids with chain lengths between 10 and 16 carbon atoms (C10 - C16). This chain is S-acyl fatty acid synthase thioesterase, medium chain, found in Homo sapiens (Human).